The chain runs to 174 residues: Ribosome maturation factor RimM (174 aa).

The PRC barrel domain maps to 95-174 (DDEFYWRDLI…QIQVEWPSDF (80 aa)).

The protein belongs to the RimM family. In terms of assembly, binds ribosomal protein uS19.

It is found in the cytoplasm. Functionally, an accessory protein needed during the final step in the assembly of 30S ribosomal subunit, possibly for assembly of the head region. Essential for efficient processing of 16S rRNA. May be needed both before and after RbfA during the maturation of 16S rRNA. It has affinity for free ribosomal 30S subunits but not for 70S ribosomes. The sequence is that of Ribosome maturation factor RimM from Idiomarina loihiensis (strain ATCC BAA-735 / DSM 15497 / L2-TR).